The primary structure comprises 464 residues: Soluble pyridine nucleotide transhydrogenase (464 aa).

35–44 (DSRREVGGNC) contacts FAD.

Belongs to the class-I pyridine nucleotide-disulfide oxidoreductase family. The cofactor is FAD.

It is found in the cytoplasm. It catalyses the reaction NAD(+) + NADPH = NADH + NADP(+). Functionally, conversion of NADPH, generated by peripheral catabolic pathways, to NADH, which can enter the respiratory chain for energy generation. The sequence is that of Soluble pyridine nucleotide transhydrogenase from Pseudomonas syringae pv. tomato (strain ATCC BAA-871 / DC3000).